A 471-amino-acid polypeptide reads, in one-letter code: Cytochrome P450 monooxygenase afvE (471 aa).

A helical transmembrane segment spans residues 265–285 (IIFYHFELSTPVAFFIIFAVY). C410 serves as a coordination point for heme.

Belongs to the cytochrome P450 family. Heme is required as a cofactor.

It localises to the membrane. Its pathway is secondary metabolite biosynthesis. In terms of biological role, cytochrome P450 monooxygenase; part of the gene cluster that mediates the biosynthesis of aflavarin, a bicoumarin that exhibits anti-insectan activity against the fungivorous beetle C.hemipterus. This is Cytochrome P450 monooxygenase afvE from Aspergillus flavus (strain ATCC 200026 / FGSC A1120 / IAM 13836 / NRRL 3357 / JCM 12722 / SRRC 167).